The sequence spans 602 residues: ATP-dependent RNA helicase DeaD (602 aa).

Positions 6-34 match the Q motif motif; it reads MTFSSFGLNSCIITALNDIGYVQPSPIQA. Positions 37-208 constitute a Helicase ATP-binding domain; that stretch reads IPYLIKGKDV…RRFMKNPKEI (172 aa). 50-57 serves as a coordination point for ATP; sequence AQTGSGKT. A DEAD box motif is present at residues 156 to 159; sequence DEAD. The region spanning 231-378 is the Helicase C-terminal domain; sequence KTDALIRFLE…EVNLPKSDFL (148 aa).

The protein belongs to the DEAD box helicase family. DeaD/CsdA subfamily.

The protein resides in the cytoplasm. It carries out the reaction ATP + H2O = ADP + phosphate + H(+). Its function is as follows. DEAD-box RNA helicase involved in various cellular processes at low temperature, including ribosome biogenesis, mRNA degradation and translation initiation. The chain is ATP-dependent RNA helicase DeaD from Buchnera aphidicola subsp. Baizongia pistaciae (strain Bp).